A 91-amino-acid chain; its full sequence is Elongation factor 1-beta (91 aa).

Belongs to the EF-1-beta/EF-1-delta family.

In terms of biological role, promotes the exchange of GDP for GTP in EF-1-alpha/GDP, thus allowing the regeneration of EF-1-alpha/GTP that could then be used to form the ternary complex EF-1-alpha/GTP/AAtRNA. This Metallosphaera sedula (strain ATCC 51363 / DSM 5348 / JCM 9185 / NBRC 15509 / TH2) protein is Elongation factor 1-beta.